The following is a 212-amino-acid chain: Small ribosomal subunit protein uS3 (212 aa).

The 69-residue stretch at 38–106 folds into the KH type-2 domain; the sequence is IRKFVKKTLY…EFAIEVNEIR (69 aa).

This sequence belongs to the universal ribosomal protein uS3 family. As to quaternary structure, part of the 30S ribosomal subunit. Forms a tight complex with proteins S10 and S14.

In terms of biological role, binds the lower part of the 30S subunit head. Binds mRNA in the 70S ribosome, positioning it for translation. The sequence is that of Small ribosomal subunit protein uS3 from Nitratidesulfovibrio vulgaris (strain ATCC 29579 / DSM 644 / CCUG 34227 / NCIMB 8303 / VKM B-1760 / Hildenborough) (Desulfovibrio vulgaris).